Consider the following 258-residue polypeptide: Putative ankyrin repeat domain-containing protein 30B-like (258 aa).

The disordered stretch occupies residues 1-21 (MERLSAAPVKGQTGPERPSPF). 4 ANK repeats span residues 71–100 (KKRTALYWACANGHAEVVTLLVDRKCQLDV), 104–133 (ENRTILMKALQCQREACANILIDSGADPNI), 137–166 (YGNTAVHYAVNSENLSVVAKLLSCGADIEV), and 170–199 (AGHTPLLLAIRKRSEEIVEFLLTKNANANA). Residues 216–258 (KISKNSQNSNPEGTSEGTPDEAAPLAERTPDTAESLVERTPDE) are disordered. A compositionally biased stretch (polar residues) spans 218–232 (SKNSQNSNPEGTSEG). Positions 243–258 (RTPDTAESLVERTPDE) are enriched in basic and acidic residues.

This Homo sapiens (Human) protein is Putative ankyrin repeat domain-containing protein 30B-like (ANKRD30BL).